The following is a 400-amino-acid chain: Endophilin-B2 (400 aa).

Met-1 is modified (N-acetylmethionine). A membrane-binding amphipathic helix region spans residues Met-1–Phe-27. Position 10 is a phosphoserine (Ser-10). The region spanning Glu-24–Pro-287 is the BAR domain. Residues Ser-205–Val-234 adopt a coiled-coil conformation. Positions Ser-340–Ser-400 constitute an SH3 domain. The residue at position 400 (Ser-400) is a Phosphoserine.

It belongs to the endophilin family. In terms of assembly, homodimer, and heterodimer with SH3GLB1.

Its subcellular location is the cytoplasm. This Mus musculus (Mouse) protein is Endophilin-B2 (Sh3glb2).